A 210-amino-acid polypeptide reads, in one-letter code: Na(+)-translocating NADH-quinone reductase subunit D (210 aa).

The next 5 helical transmembrane spans lie at 42-62 (FVMTLAVTFVTALSNFFVSVI), 72-92 (IIVQMAIIASLVIVVDQILKA), 103-123 (VFVGLIITNCIVMGRAEAFAM), 131-151 (LIDGIGNGLGYGFVLITVGFF), and 178-198 (NGLMLLAPSAFFLIGFMIWAI).

Belongs to the NqrDE/RnfAE family. As to quaternary structure, composed of six subunits; NqrA, NqrB, NqrC, NqrD, NqrE and NqrF.

It localises to the cell inner membrane. It carries out the reaction a ubiquinone + n Na(+)(in) + NADH + H(+) = a ubiquinol + n Na(+)(out) + NAD(+). In terms of biological role, NQR complex catalyzes the reduction of ubiquinone-1 to ubiquinol by two successive reactions, coupled with the transport of Na(+) ions from the cytoplasm to the periplasm. NqrA to NqrE are probably involved in the second step, the conversion of ubisemiquinone to ubiquinol. The polypeptide is Na(+)-translocating NADH-quinone reductase subunit D (Vibrio vulnificus (strain YJ016)).